The following is a 201-amino-acid chain: Recombination protein RecR (201 aa).

The C4-type zinc finger occupies 58–73 (CGRCGALTDVDPCGIC). In terms of domain architecture, Toprim spans 81–178 (ETLCLVSEWD…RVTRLAQGIP (98 aa)).

This sequence belongs to the RecR family.

In terms of biological role, may play a role in DNA repair. It seems to be involved in an RecBC-independent recombinational process of DNA repair. It may act with RecF and RecO. This chain is Recombination protein RecR, found in Nitratidesulfovibrio vulgaris (strain DSM 19637 / Miyazaki F) (Desulfovibrio vulgaris).